Reading from the N-terminus, the 302-residue chain is Glutaminase (302 aa).

Positions 61, 111, 155, 162, 186, 238, and 256 each coordinate substrate.

The protein belongs to the glutaminase family. Homotetramer.

It catalyses the reaction L-glutamine + H2O = L-glutamate + NH4(+). The protein is Glutaminase of Pseudomonas putida (strain ATCC 700007 / DSM 6899 / JCM 31910 / BCRC 17059 / LMG 24140 / F1).